The sequence spans 135 residues: Transcriptional regulator HosA (135 aa).

Positions 4–134 (RNKAFHQLRQ…FVQLVRKMMN (131 aa)) constitute an HTH marR-type domain. A DNA-binding region (H-T-H motif) is located at residues 48–71 (QVALIEAAVSTKATLAEMLARMEN).

Involved in the temperature-dependent positive control of flagellum-driven swimming motility and cellular aggregation. Regulates fliC expression by directly interacting with fliC promoter. The chain is Transcriptional regulator HosA (hosA) from Escherichia coli O157:H7.